The chain runs to 360 residues: DNA replication and repair protein RecF (360 aa).

33-40 serves as a coordination point for ATP; it reads GENGSGKT.

Belongs to the RecF family.

The protein localises to the cytoplasm. Its function is as follows. The RecF protein is involved in DNA metabolism; it is required for DNA replication and normal SOS inducibility. RecF binds preferentially to single-stranded, linear DNA. It also seems to bind ATP. The chain is DNA replication and repair protein RecF from Rickettsia bellii (strain OSU 85-389).